Reading from the N-terminus, the 503-residue chain is UDP-N-acetylmuramoylalanine--D-glutamate ligase (503 aa).

129–135 (GTNGKTT) serves as a coordination point for ATP.

The protein belongs to the MurCDEF family.

It localises to the cytoplasm. It carries out the reaction UDP-N-acetyl-alpha-D-muramoyl-L-alanine + D-glutamate + ATP = UDP-N-acetyl-alpha-D-muramoyl-L-alanyl-D-glutamate + ADP + phosphate + H(+). It participates in cell wall biogenesis; peptidoglycan biosynthesis. Cell wall formation. Catalyzes the addition of glutamate to the nucleotide precursor UDP-N-acetylmuramoyl-L-alanine (UMA). In Burkholderia multivorans (strain ATCC 17616 / 249), this protein is UDP-N-acetylmuramoylalanine--D-glutamate ligase.